Here is a 118-residue protein sequence, read N- to C-terminus: Nucleoid-associated protein TM_0687 (118 aa).

This sequence belongs to the YbaB/EbfC family. In terms of assembly, homodimer.

Its subcellular location is the cytoplasm. The protein localises to the nucleoid. Its function is as follows. Binds to DNA and alters its conformation. May be involved in regulation of gene expression, nucleoid organization and DNA protection. This Thermotoga maritima (strain ATCC 43589 / DSM 3109 / JCM 10099 / NBRC 100826 / MSB8) protein is Nucleoid-associated protein TM_0687.